Reading from the N-terminus, the 154-residue chain is MKLNELGNCKGATRNRKRVGRGIGSGTGKTSGRGVKGQKSRSGVSLNGFEGGQMPIYRRLPKRGFRNFFAKNYNEVSLGRIQLAVDTGKLDIGKPVDIIVLKEAGIIRRLKDGVRLLSDGELKAKITFNVSYTSKAARIKIEKAGGRVIVPEAV.

Residues 1–44 (MKLNELGNCKGATRNRKRVGRGIGSGTGKTSGRGVKGQKSRSGV) are disordered. Gly residues predominate over residues 21-35 (RGIGSGTGKTSGRGV).

This sequence belongs to the universal ribosomal protein uL15 family. Part of the 50S ribosomal subunit.

Binds to the 23S rRNA. The sequence is that of Large ribosomal subunit protein uL15 from Bartonella quintana (strain Toulouse) (Rochalimaea quintana).